The chain runs to 880 residues: GRB2-associated and regulator of MAPK protein 2 (880 aa).

A CABIT region spans residues 12 to 320 (RWSMGAFPLD…HFLLLTDTPR (309 aa)). Disordered regions lie at residues 385–407 (PGAVRAPGPPGRLGPALPAPGDS), 461–483 (IVGPPRHEPEAPPPPVPPKSEAV), 527–548 (SSLSYYSSGLQDGAGSRSGSGS), 569–611 (SESS…ADTP), and 633–713 (APFG…ELGQ). 2 stretches are compositionally biased toward low complexity: residues 640–663 (PFSGPAHPSGAPAASSSGSISTSG) and 683–696 (QGYSAAPSSSLSSS). Position 740 is a phosphoserine (Ser-740). Residues 813-877 (SALSLEEVSR…KIMQFIKGWR (65 aa)) enclose the SAM domain.

It belongs to the GAREM family.

Probable adapter protein that provides a critical link between cell surface epidermal growth factor receptor and the MAPK/ERK signaling pathway. The chain is GRB2-associated and regulator of MAPK protein 2 (Garem2) from Mus musculus (Mouse).